The following is a 108-amino-acid chain: Phosphoribosyl-ATP pyrophosphatase (108 aa).

This sequence belongs to the PRA-PH family.

It localises to the cytoplasm. It catalyses the reaction 1-(5-phospho-beta-D-ribosyl)-ATP + H2O = 1-(5-phospho-beta-D-ribosyl)-5'-AMP + diphosphate + H(+). The protein operates within amino-acid biosynthesis; L-histidine biosynthesis; L-histidine from 5-phospho-alpha-D-ribose 1-diphosphate: step 2/9. The protein is Phosphoribosyl-ATP pyrophosphatase of Thiobacillus denitrificans (strain ATCC 25259 / T1).